The chain runs to 445 residues: Phosphoglucosamine mutase (445 aa).

The active-site Phosphoserine intermediate is Ser102. Positions 102, 241, 243, and 245 each coordinate Mg(2+). Ser102 bears the Phosphoserine mark.

The protein belongs to the phosphohexose mutase family. Mg(2+) is required as a cofactor. Post-translationally, activated by phosphorylation.

It catalyses the reaction alpha-D-glucosamine 1-phosphate = D-glucosamine 6-phosphate. Its function is as follows. Catalyzes the conversion of glucosamine-6-phosphate to glucosamine-1-phosphate. The polypeptide is Phosphoglucosamine mutase (Rhodococcus opacus (strain B4)).